The chain runs to 523 residues: Nuclear receptor ROR-alpha (523 aa).

Low complexity predominate over residues 1–26; sequence MESAPAAPDPAASEPGSSGSEAAAGS. Positions 1 to 63 are disordered; the sequence is MESAPAAPDP…SRGISVTKKT (63 aa). At K38 the chain carries N6-methyllysine. 2 NR C4-type zinc fingers span residues 73–93 and 109–133; these read CKIC…CEGC and CPRQ…LQKC. The segment at residues 73 to 138 is a DNA-binding region (nuclear receptor); sequence CKICGDKSSG…RLQKCLAVGM (66 aa). The segment at 154 to 183 is disordered; the sequence is DSLYAEVQKHRMQQQQRDHQQQPGEAEPLT. T183 bears the Phosphothreonine; by MAPK1 mark. A Glycyl lysine isopeptide (Lys-Gly) (interchain with G-Cter in SUMO) cross-link involves residue K240. Residues 272 to 510 enclose the NR LBD domain; it reads ELEHLAQNIS…LHFPPLYKEL (239 aa). Positions 506-511 match the AF-2 motif; that stretch reads LYKELF.

This sequence belongs to the nuclear hormone receptor family. NR1 subfamily. In terms of assembly, monomer. Interacts (via the DNA-binding domain) with HIF1A; the interaction enhances HIF1A transcription under hypoxia through increasing protein stability. Interacts with CEBPB; the interaction disrupts the interaction CEBPB:EP300. Interacts with the coactivators NCOA2, PPARGC1A (via LXXLL motif), EP300 and MED1. Interacts with the corepressor NCOR1. Interacts with MAGED1 and CTNNB1. Interacts with CRY1 and PER2. Interacts (via AF-2 motif) with PROX1. Interacts with NRIP1. Isoform 4 interacts (via AF-2 motif) with isoform 1 of FOXP3 (via LXXLL motif). Post-translationally, phosphorylation by conventional PKCs in neurons inhibits transcriptional activity. Phosphorylated on Thr-183 by MAPK1/ERK1 in vitro. Sumoylated by SENP1 and SENP2. Sumoylation, promoted by PIAS2, PIAS3, PIAS4 but not PIAS1, enhances the transcriptional activity. Desumoylated by SENP1. In terms of processing, ubiquitinated, leading to its degradation by the proteasome. Proteasomal degradation is required for efficient transcriptional activity and is prevented by HR. Post-translationally, monomethylated at Lys-38 by EZH2, this creates a degron recognized by a DCX (DDB1-DCAF1/VPRBP-CUL4A-RBX1) E3 ubiquitin ligase complex. Expressed in cerebellum, heart, liver, lung, kidney, retina and brown and white adipose tissues. Expressed in the subset of mature Th17 cells.

It is found in the nucleus. Its function is as follows. Nuclear receptor that binds DNA as a monomer to ROR response elements (RORE) containing a single core motif half-site 5'-AGGTCA-3' preceded by a short A-T-rich sequence. Key regulator of embryonic development, cellular differentiation, immunity, circadian rhythm as well as lipid, steroid, xenobiotics and glucose metabolism. Considered to have intrinsic transcriptional activity, have some natural ligands like oxysterols that act as agonists (25-hydroxycholesterol) or inverse agonists (7-oxygenated sterols), enhancing or repressing the transcriptional activity, respectively. Recruits distinct combinations of cofactors to target genes regulatory regions to modulate their transcriptional expression, depending on the tissue, time and promoter contexts. Regulates genes involved in photoreceptor development including OPN1SW, OPN1SM and ARR3 and skeletal muscle development with MYOD1. Required for proper cerebellum development, regulates SHH gene expression, among others, to induce granule cells proliferation as well as expression of genes involved in calcium-mediated signal transduction. Regulates the circadian expression of several clock genes, including CLOCK, BMAL1, NPAS2 and CRY1. Competes with NR1D1 for binding to their shared DNA response element on some clock genes such as BMAL1, CRY1 and NR1D1 itself, resulting in NR1D1-mediated repression or RORA-mediated activation of clock genes expression, leading to the circadian pattern of clock genes expression. Therefore influences the period length and stability of the clock. Regulates genes involved in lipid metabolism such as apolipoproteins APOA1, APOA5, APOC3 and PPARG. In liver, has specific and redundant functions with RORC as positive or negative modulator of expression of genes encoding phase I and phase II proteins involved in the metabolism of lipids, steroids and xenobiotics, such as CYP7B1 and SULT2A1. Induces a rhythmic expression of some of these genes. In addition, interplays functionally with NR1H2 and NR1H3 for the regulation of genes involved in cholesterol metabolism. Also involved in the regulation of hepatic glucose metabolism through the modulation of G6PC1 and PCK1. In adipose tissue, plays a role as negative regulator of adipocyte differentiation, probably acting through dual mechanisms. May suppress CEBPB-dependent adipogenesis through direct interaction and PPARG-dependent adipogenesis through competition for DNA-binding. Downstream of IL6 and TGFB and synergistically with RORC isoform 2, is implicated in the lineage specification of uncommitted CD4(+) T-helper (T(H)) cells into T(H)17 cells, antagonizing the T(H)1 program. Probably regulates IL17 and IL17F expression on T(H) by binding to the essential enhancer conserved non-coding sequence 2 (CNS2) in the IL17-IL17F locus. Involved in hypoxia signaling by interacting with and activating the transcriptional activity of HIF1A. May inhibit cell growth in response to cellular stress. May exert an anti-inflammatory role by inducing CHUK expression and inhibiting NF-kappa-B signaling. In Mus musculus (Mouse), this protein is Nuclear receptor ROR-alpha (Rora).